The primary structure comprises 949 residues: Collagen alpha-2(I) chain (949 aa).

The interval 1–949 (SGGFDFSFLP…FGYEGDFYRA (949 aa)) is disordered. A 4-hydroxyproline mark is found at P10, P13, P34, and P40. Low complexity predominate over residues 27 to 66 (LMGPRGPPGASGAPGPQGFQGPAGEPGEPGQTGPAGARGP). K95 carries the post-translational modification 5-hydroxylysine; alternate. Residue K95 is glycosylated (O-linked (Gal...) hydroxylysine; alternate). Composition is skewed to low complexity over residues 147 to 162 (SVGP…SAGP) and 208 to 229 (PGAN…AGAP). A compositionally biased stretch (gly residues) spans 263-272 (GESGGKGEPG). Residues 273 to 283 (SAGPQGPPGSS) show a composition bias toward low complexity. Residues 292 to 313 (NGEGSTGPTGPPGLRGGPGSRG) are compositionally biased toward gly residues. 4-hydroxyproline occurs at positions 348 and 351. The segment covering 377–396 (LPGIDGRPGPIGPAGARGEA) has biased composition (low complexity). Residues 435–444 (GVQGGKGEQG) show a composition bias toward gly residues. 2 stretches are compositionally biased toward low complexity: residues 490-507 (PGES…SRGP) and 519-529 (EPGVVGAPGTA). Over residues 530–539 (GPAGSGGLPG) the composition is skewed to gly residues. Low complexity-rich tracts occupy residues 562–606 (VGTT…PRGS) and 613–633 (VGPA…QPGA). A compositionally biased stretch (basic and acidic residues) spans 634-643 (KGERGTKGPK). Residues 651–661 (PTGPVGSAGPA) are compositionally biased toward low complexity. Positions 671–680 (GSRGDGGPPG) are enriched in gly residues. The segment covering 682–691 (TGFPGAAGRT) has biased composition (low complexity). The span at 722–736 (GPVGRGETGAGGPPG) shows a compositional bias: gly residues. Low complexity-rich tracts occupy residues 737–771 (FTGE…LGLP), 779–792 (LPGV…PGPL), and 810–825 (EPGP…ALGP). A compositionally biased stretch (basic and acidic residues) spans 835 to 846 (RGDKGEPGEKGP). Positions 921 to 931 (PAGPPGPPGPP) are enriched in pro residues.

The protein belongs to the fibrillar collagen family. Trimers of one alpha 2(I) and two alpha 1(I) chains. Interacts (via C-terminus) with TMEM131 (via PapD-L domain); the interaction is direct and is involved in assembly and TRAPPIII ER-to-Golgi transport complex-dependent secretion of collagen. Post-translationally, prolines at the third position of the tripeptide repeating unit (G-X-Y) are hydroxylated in some or all of the chains. In terms of tissue distribution, expressed in bones.

Its subcellular location is the secreted. The protein localises to the extracellular space. The protein resides in the extracellular matrix. In terms of biological role, type I collagen is a member of group I collagen (fibrillar forming collagen). The sequence is that of Collagen alpha-2(I) chain from Acratocnus ye (Hispaniolan ground sloth).